Reading from the N-terminus, the 404-residue chain is UPF0674 endoplasmic reticulum membrane protein YNR021W (404 aa).

Ser-2 bears the N-acetylserine mark. Residue Asn-44 is glycosylated (N-linked (GlcNAc...) asparagine). Residues 49–68 form a helical membrane-spanning segment; it reads LCALGVLFLVYAFYKFGNSV. The N-linked (GlcNAc...) asparagine glycan is linked to Asn-98. A disordered region spans residues 369–404; sequence AKRRQLKASGQQEKVDQKMKEKRERRLKNKQRTRFQ. Over residues 381–392 the composition is skewed to basic and acidic residues; the sequence is EKVDQKMKEKRE. Residues 393–404 are compositionally biased toward basic residues; sequence RRLKNKQRTRFQ.

This sequence belongs to the UPF0674 family.

It localises to the endoplasmic reticulum membrane. The polypeptide is UPF0674 endoplasmic reticulum membrane protein YNR021W (Saccharomyces cerevisiae (strain ATCC 204508 / S288c) (Baker's yeast)).